The following is a 162-amino-acid chain: Sorting nexin-3 (162 aa).

A2 carries the N-acetylalanine modification. The PX domain occupies 27–151 (NFLEIDVSNP…HMFLQDEIID (125 aa)). R43 is modified (omega-N-methylarginine). The a 1,2-diacyl-sn-glycero-3-phospho-(1D-myo-inositol-3-phosphate) site is built by R70, S72, K95, and R118. The residue at position 72 (S72) is a Phosphoserine. A Glycyl lysine isopeptide (Lys-Gly) (interchain with G-Cter in SUMO2) cross-link involves residue K95. Residues 147-162 (DEIIDKSYTPSKIRHA) are binds predominantly to PtdIns(P5) and weaker to PtdIns(P3) abd PtdIns(P4); involved in neurite outgrowth regulation.

Belongs to the sorting nexin family. As to quaternary structure, interacts with VPS26A, VPS29 and VPS35; the interaction with VPS35 is direct. The association with the retromer CSC subcomplex subunits is proposed to represent a functional distinct retromer variant described as SNX3-retromer complex. Interacts with USP10 and SCNN1A. Interacts with TRFC. Interacts with SNX8; 2 molecules of SNX8 seems to associate with one molecule of SNX3. Interacts with PTPRU. Interacts with MON2 and DOP1B. Post-translationally, ubiquitinated, leading to its proteasomal degradation. Deubiquitinated by USP10.

It localises to the early endosome. It is found in the cytoplasmic vesicle. The protein resides in the phagosome. In terms of biological role, phosphoinositide-binding protein required for multivesicular body formation. Specifically binds phosphatidylinositol 3-phosphate (PtdIns(P3)). Can also bind phosphatidylinositol 4-phosphate (PtdIns(P4)), phosphatidylinositol 5-phosphate (PtdIns(P5)) and phosphatidylinositol 3,5-biphosphate (PtdIns(3,5)P2). Plays a role in protein transport between cellular compartments. Together with RAB7A facilitates endosome membrane association of the retromer cargo-selective subcomplex (CSC/VPS). May in part act as component of the SNX3-retromer complex which mediates the retrograde endosome-to-TGN transport of WLS distinct from the SNX-BAR retromer pathway. Promotes stability and cell surface expression of epithelial sodium channel (ENAC) subunits SCNN1A and SCNN1G. Not involved in EGFR degradation. Involved in the regulation of phagocytosis in dendritic cells possibly by regulating EEA1 recruitment to the nascent phagosomes. Involved in iron homeostasis through regulation of endocytic recycling of the transferrin receptor TFRC presumably by delivering the transferrin:transferrin receptor complex to recycling endosomes; the function may involve the CSC retromer subcomplex. In the case of Salmonella enterica infection plays arole in maturation of the Salmonella-containing vacuole (SCV) and promotes recruitment of LAMP1 to SCVs. In Homo sapiens (Human), this protein is Sorting nexin-3.